The following is a 102-amino-acid chain: Small ribosomal subunit protein uS10 (102 aa).

The protein belongs to the universal ribosomal protein uS10 family. As to quaternary structure, part of the 30S ribosomal subunit.

Involved in the binding of tRNA to the ribosomes. This is Small ribosomal subunit protein uS10 from Beijerinckia indica subsp. indica (strain ATCC 9039 / DSM 1715 / NCIMB 8712).